A 79-amino-acid polypeptide reads, in one-letter code: Cell division protein ZapB (79 aa).

The stretch at 4-78 (EVFEKLESKV…LRALLGKMEE (75 aa)) forms a coiled coil.

This sequence belongs to the ZapB family. In terms of assembly, homodimer. The ends of the coiled-coil dimer bind to each other, forming polymers. Interacts with FtsZ.

It is found in the cytoplasm. Its function is as follows. Non-essential, abundant cell division factor that is required for proper Z-ring formation. It is recruited early to the divisome by direct interaction with FtsZ, stimulating Z-ring assembly and thereby promoting cell division earlier in the cell cycle. Its recruitment to the Z-ring requires functional FtsA or ZipA. The protein is Cell division protein ZapB of Serratia proteamaculans (strain 568).